The sequence spans 145 residues: Large ribosomal subunit protein uL13 (145 aa).

The protein belongs to the universal ribosomal protein uL13 family. As to quaternary structure, part of the 50S ribosomal subunit.

Its function is as follows. This protein is one of the early assembly proteins of the 50S ribosomal subunit, although it is not seen to bind rRNA by itself. It is important during the early stages of 50S assembly. This chain is Large ribosomal subunit protein uL13, found in Macrococcus caseolyticus (strain JCSC5402) (Macrococcoides caseolyticum).